The primary structure comprises 372 residues: Germination protease (372 aa).

A propeptide spanning residues Met-1–Asp-15 is cleaved from the precursor.

The protein belongs to the peptidase A25 family. As to quaternary structure, homotetramer. Autoproteolytically processed. The inactive tetrameric zymogen termed p46 autoprocesses to a smaller form termed p41, which is active only during spore germination.

The enzyme catalyses Endopeptidase action with P4 Glu or Asp, P1 preferably Glu &gt; Asp, P1' hydrophobic and P2' Ala.. In terms of biological role, initiates the rapid degradation of small, acid-soluble proteins during spore germination. This chain is Germination protease, found in Geobacillus sp. (strain WCH70).